The sequence spans 1254 residues: Structural polyprotein (1254 aa).

A necessary for nucleocapsid assembly and virus assembly region spans residues Met1–Phe33. Residues Phe33–Lys68 are host transcription inhibition. The Supraphysiological nuclear export signal signature appears at Leu41–Leu48. The interval Leu48 to Met119 is disordered. The Nuclear localization signal motif lies at Lys64–Lys68. 2 stretches are compositionally biased toward basic residues: residues Asn79–Thr93 and Gly102–Met117. A binding to the viral RNA region spans residues Lys91–Thr126. At Thr93 the chain carries Phosphothreonine. The ribosome-binding stretch occupies residues Pro111–Lys125. Ser123 carries the phosphoserine modification. Residues Lys125–Trp274 enclose the Peptidase S3 domain. Thr126 bears the Phosphothreonine mark. Catalysis depends on His151, which acts as the Charge relay system. The tract at residues Lys167 to Tyr172 is interaction with spike glycoprotein E2. Active-site charge relay system residues include Asp173 and Ser225. The interaction with spike glycoprotein E2 stretch occupies residues Glu259–Thr263. Residues Ser275–Val286 form a functions as an uncleaved signal peptide for the precursor of protein E3/E2 region. At Ser275–Thr700 the chain is on the extracellular side. Cystine bridges form between Cys281/Cys290, Cys352/Cys456, Cys355/Cys360, Cys423/Cys437, Cys484/Cys599, Cys533/Cys559, and Cys535/Cys553. N-linked (GlcNAc...) asparagine; by host glycosylation is present at Asn285. Asn651 carries N-linked (GlcNAc...) asparagine; by host glycosylation. A helical membrane pass occupies residues Ile701–Leu721. The Cytoplasmic portion of the chain corresponds to Phe722 to Ala756. An interaction with the capsid protein region spans residues Lys724–Ser728. Residues Cys729, Cys749, and Cys750 are each lipidated (S-palmitoyl cysteine; by host). The transient transmembrane before p62-6K protein processing stretch occupies residues Cys729 to Cys749. Residues Cys729 and Cys750 are joined by a disulfide bond. At Glu757–Gln771 the chain is on the extracellular side. 2 consecutive transmembrane segments (helical) span residues Gln772 to Arg790 and Leu791 to Gly811. Over Ala812 to Ser1224 the chain is Extracellular. Intrachain disulfides connect Cys861–Cys926, Cys874–Cys906, Cys875–Cys908, and Cys880–Cys890. Residues Val896–Thr913 are E1 fusion peptide loop. N-linked (GlcNAc...) asparagine; by host glycosylation is found at Asn946 and Asn1082. 4 disulfides stabilise this stretch: Cys1071/Cys1083, Cys1113/Cys1188, Cys1118/Cys1192, and Cys1140/Cys1182. A helical transmembrane segment spans residues Leu1225–Met1245. Residues Tyr1246 to Asn1254 lie on the Cytoplasmic side of the membrane.

In terms of assembly, homodimer. Homomultimer. Interacts with host karyopherin KPNA4; this interaction allows the nuclear import of the viral capsid protein. Interacts with spike glycoprotein E2. Interacts with host IRAK1; the interaction leads to inhibition of IRAK1-dependent signaling. Part of a tetrameric complex composed of host CRM1, host importin alpha/beta dimer and the viral capsid; this complex blocks the receptor-mediated transport through the nuclear pore. Interacts with host phosphatase PPP1CA; this interaction dephosphorylates the capsid protein, which increases its ability to bind to the viral genome. The precursor of protein E3/E2 and E1 form a heterodimer shortly after synthesis. As to quaternary structure, interacts with spike glycoprotein E2. The precursor of protein E3/E2 and E1 form a heterodimer shortly after synthesis. Processing of the precursor of protein E3/E2 into E2 and E3 results in a heterodimer of the spike glycoproteins E2 and E1. Spike at virion surface are constituted of three E2-E1 heterodimers. After target cell attachment and endocytosis, E1 change conformation to form homotrimers. Interacts with 6K protein. Interacts with host LDLRAD3; this interaction mediates viral entry to the host cell. In terms of assembly, interacts with spike glycoprotein E1. Processing of the precursor of protein E3/E2 into E2 and E3 results in a heterodimer of the spike glycoproteins E2 and E1. Spike at virion surface are constituted of a trimer of E2-E1 heterodimers. Interacts with 6K protein. Interacts with host LDLRAD3; this interaction mediates viral entry to the host cell. Oligomer. Interacts with spike glycoprotein E1. Interacts with spike glycoprotein E2. Structural polyprotein: Specific enzymatic cleavages in vivo yield mature proteins. Capsid protein is auto-cleaved during polyprotein translation, unmasking a signal peptide at the N-terminus of the precursor of E3/E2. The remaining polyprotein is then targeted to the host endoplasmic reticulum, where host signal peptidase cleaves it into pE2, 6K and E1 proteins. pE2 is further processed to mature E3 and E2 by host furin in trans-Golgi vesicle. In terms of processing, phosphorylated on serine and threonine residues. Post-translationally, palmitoylated via thioester bonds. These palmitoylations may induce disruption of the C-terminus transmembrane. This would result in the reorientation of E2 C-terminus from lumenal to cytoplasmic side. N-glycosylated. In terms of processing, palmitoylated via thioester bonds.

The protein resides in the virion. It is found in the host cytoplasm. It localises to the host cell membrane. The protein localises to the host nucleus. Its subcellular location is the virion membrane. The protein resides in the host Golgi apparatus. It is found in the host trans-Golgi network. It localises to the host endoplasmic reticulum. It catalyses the reaction Autocatalytic release of the core protein from the N-terminus of the togavirus structural polyprotein by hydrolysis of a -Trp-|-Ser- bond.. Its function is as follows. Forms an icosahedral capsid with a T=4 symmetry composed of 240 copies of the capsid protein surrounded by a lipid membrane through which penetrate 80 spikes composed of trimers of E1-E2 heterodimers. The capsid protein binds to the viral RNA genome at a site adjacent to a ribosome binding site for viral genome translation following genome release. Possesses a protease activity that results in its autocatalytic cleavage from the nascent structural protein. Following its self-cleavage, the capsid protein transiently associates with ribosomes, and within several minutes the protein binds to viral RNA and rapidly assembles into icosahedric core particles. The resulting nucleocapsid eventually associates with the cytoplasmic domain of the spike glycoprotein E2 at the cell membrane, leading to budding and formation of mature virions. In case of infection, new virions attach to target cells and after clathrin-mediated endocytosis their membrane fuses with the host endosomal membrane. This leads to the release of the nucleocapsid into the cytoplasm, followed by an uncoating event necessary for the genomic RNA to become accessible. The uncoating might be triggered by the interaction of capsid proteins with ribosomes. Binding of ribosomes would release the genomic RNA since the same region is genomic RNA-binding and ribosome-binding. Specifically inhibits interleukin-1 receptor-associated kinase 1/IRAK1-dependent signaling during viral entry, representing a means by which the alphaviruses may evade innate immune detection and activation prior to viral gene expression. Inhibits host transcription. Forms a tetrameric complex with XPO1/CRM1 and the nuclear import receptor importin. This complex blocks the central channel of host nuclear pores thereby inhibiting the receptor-mediated nuclear transport and thus the host mRNA and rRNA transcription. The inhibition of transcription is linked to a cytopathic effect on the host cell. Functionally, provides the signal sequence for the translocation of the precursor of protein E3/E2 to the host endoplasmic reticulum. Furin-cleaved E3 remains associated with spike glycoprotein E1 and mediates pH protection of the latter during the transport via the secretory pathway. After virion release from the host cell, the assembly protein E3 is gradually released in the extracellular space. In terms of biological role, plays a role in viral attachment to target host cell, by binding to the cell receptor LDLRAD3. Synthesized as a p62 precursor which is processed by furin at the cell membrane just before virion budding, giving rise to E2-E1 heterodimer. The p62-E1 heterodimer is stable, whereas E2-E1 is unstable and dissociate at low pH. p62 is processed at the last step, presumably to avoid E1 fusion activation before its final export to cell surface. E2 C-terminus contains a transitory transmembrane that would be disrupted by palmitoylation, resulting in reorientation of the C-terminal tail from lumenal to cytoplasmic side. This step is critical since E2 C-terminus is involved in budding by interacting with capsid proteins. This release of E2 C-terminus in cytoplasm occurs lately in protein export, and precludes premature assembly of particles at the endoplasmic reticulum membrane. Acts as a viroporin that participates in virus glycoprotein processing and transport to the plasma membrane, cell permeabilization and budding of viral particles. Disrupts the calcium homeostasis of the cell, probably at the endoplasmic reticulum level. This leads to cytoplasmic calcium elevation. Because of its lipophilic properties, the 6K protein is postulated to influence the selection of lipids that interact with the transmembrane domains of the glycoproteins, which, in turn, affects the deformability of the bilayer required for the extreme curvature that occurs as budding proceeds. Present in low amount in virions, about 3% compared to viral glycoproteins. Its function is as follows. Class II viral fusion protein. Fusion activity is inactive as long as E1 is bound to E2 in mature virion. After virus attachment to cell receptor LDLRAD3 and endocytosis, acidification of the endosome induce dissociation of E1/E2 heterodimer and concomitant trimerization of the E1 subunits. This E1 trimer is fusion active, and promotes release of viral nucleocapsid in cytoplasm after endosome and viral membrane fusion. Efficient fusion requires the presence of cholesterol and sphingolipid in the target membrane. The sequence is that of Structural polyprotein from Venezuelan equine encephalitis virus (strain Mena II) (VEEV).